A 268-amino-acid polypeptide reads, in one-letter code: MALVVKGKVNINEFIDLTKMEKILPSMFTPVKRVMCSKVDKIMVHENESLSEVNLLKGVKLIDSGYVCLAGLVVTGEWNLPDNCRGGVSVCLVDKRMERADEATLGSYYTAAAKKRFQFKVVPNYAITTQDAMKNVWQVLVNIRNVKMSAGFCPLSLEFVSVCIVYRNNIKLGLREKITNVRDGGPMELTEEVVDEFMEDVPMSIRLAKFRSRTGKKSDVRKGKNSSSDRSVPNKNYRNVKDFGGMSLKKNNLIDDDSEATVAESDSF.

Positions 215–243 (GKKSDVRKGKNSSSDRSVPNKNYRNVKDF) are disordered. Positions 225–237 (NSSSDRSVPNKNY) are enriched in polar residues.

Belongs to the tobamovirus movement protein family. Binds to host RBCS at the plasmodesmata; this interaction seems required for viral systemic movement. In resistant plants, interacts with host MBP2C at host microtubules; this interaction prevents virus cell to cell movement. In resistant plants, interacts with host resistance (R) protein (e.g. tomato ToMV resistance protein TM-2(2), AC Q71BG9) at the host plasma membrane; this interaction triggers host defense responses leading to programmed cell death.

It is found in the host cytoplasm. It localises to the host cytoskeleton. The protein resides in the host cell junction. The protein localises to the host plasmodesma. Its function is as follows. Transports viral genome to neighboring plant cells directly through plasmosdesmata, without any budding. The movement protein allows efficient cell to cell propagation, by bypassing the host cell wall barrier. Forms a ribonucleoprotein complex with viral RNA. Binds microtubules and modulates microtubule stability. Can bind double-stranded DNA. Triggers host hypersensitive defense reaction in incompatible plants harboring resistance (R) proteins. The polypeptide is Movement protein (MP) (Nicotiana tabacum (Common tobacco)).